Reading from the N-terminus, the 297-residue chain is tRNA pseudouridine synthase B (297 aa).

Residue Asp-44 is the Nucleophile of the active site.

This sequence belongs to the pseudouridine synthase TruB family. Type 1 subfamily.

It catalyses the reaction uridine(55) in tRNA = pseudouridine(55) in tRNA. Its function is as follows. Responsible for synthesis of pseudouridine from uracil-55 in the psi GC loop of transfer RNAs. This Mycobacterium sp. (strain JLS) protein is tRNA pseudouridine synthase B.